The primary structure comprises 181 residues: Protein csk22 (181 aa).

5 helical membrane passes run 5–22 (LQSV…YKKI), 35–57 (WLFT…SAIH), 61–78 (YGYL…VFFA), 91–113 (IYFR…RFLY), and 140–162 (LTIG…IIKL).

Its subcellular location is the cell membrane. In Bacillus subtilis (strain 168), this protein is Protein csk22 (csk22).